An 865-amino-acid chain; its full sequence is TATA box-binding protein-associated factor RNA polymerase I subunit B (865 aa).

The RRN7-type zinc finger occupies 1–33 (MHSAKNEKCNACGGYRFSVNDGFKYCDRCGALF). Zn(2+) contacts are provided by Cys9, Cys12, Cys26, and Cys29. The tract at residues 35 to 99 (NFEELEEEEG…DFLQQQAIKG (65 aa)) is B-reader. The segment at 100-111 (EELELPHDATPD) is B-linker. Residues 112–348 (YLYRLALRLF…SQPERMKQGE (237 aa)) form an N-terminal cyclin fold region. Residues 233–261 (DEDGDQDAQGGQQLDDLTLETTQNPDESI) are disordered. Over residues 239 to 248 (DAQGGQQLDD) the composition is skewed to low complexity. Residues 252 to 261 (ETTQNPDESI) are compositionally biased toward polar residues. The segment at 349–496 (VVKPTIVDYA…LLTLRLTFQL (148 aa)) is C-terminal cyclin fold.

This sequence belongs to the RRN7/TAF1B family.

It localises to the nucleus. It is found in the nucleolus. In terms of biological role, component of RNA polymerase I core factor complex that acts as a GTF2B/TFIIB-like factor and plays a key role in multiple steps during transcription initiation such as pre-initiation complex (PIC) assembly and postpolymerase recruitment events in polymerase I (Pol I) transcription. Binds rDNA promoters and plays a role in Pol I recruitment. The polypeptide is TATA box-binding protein-associated factor RNA polymerase I subunit B (Caenorhabditis elegans).